We begin with the raw amino-acid sequence, 310 residues long: MLFDKYGRSLQKLRYVVNDECNYNCVFCHFEGQSRRQGRYLTAEDYGFVTSVFKSLGVADFKITGGEPLLRGDIDLIVANIAKTGAYVTLTTNGYLLRKWVRKLQAAGLKRANVSIHTTDPEKYSKITGVPPSAFREVLRGLTEARDVGISLKLNAVVLRGINTDRDSVKNLVKLAASLGAALQFIELMPSGWGASVFNELYEPIETLVNIIFELGGRPAGVRKELHNRPLYNIAGVTVELIKNFSNPTFCSGCTTMRLTSDGKLKTCIYADSSVDLMPYIKSRDVEGLLYAVRTALARREPRFKLYSSS.

A Radical SAM core domain is found at Lys-5 to Arg-218. Arg-14 contacts GTP. Cys-21, Cys-25, and Cys-28 together coordinate [4Fe-4S] cluster. Residue Lys-62 coordinates GTP. Gly-66 is a binding site for S-adenosyl-L-methionine. Thr-91 is a GTP binding site. An S-adenosyl-L-methionine-binding site is contributed by Ser-115. Position 153 (Lys-153) interacts with GTP. Residues Cys-251, Cys-254, and Cys-268 each coordinate [4Fe-4S] cluster.

It belongs to the radical SAM superfamily. MoaA family. [4Fe-4S] cluster is required as a cofactor.

The catalysed reaction is GTP + AH2 + S-adenosyl-L-methionine = (8S)-3',8-cyclo-7,8-dihydroguanosine 5'-triphosphate + 5'-deoxyadenosine + L-methionine + A + H(+). Its pathway is cofactor biosynthesis; molybdopterin biosynthesis. Its function is as follows. Catalyzes the cyclization of GTP to (8S)-3',8-cyclo-7,8-dihydroguanosine 5'-triphosphate. This Pyrobaculum aerophilum (strain ATCC 51768 / DSM 7523 / JCM 9630 / CIP 104966 / NBRC 100827 / IM2) protein is Probable GTP 3',8-cyclase.